The sequence spans 268 residues: Tryptophan synthase alpha chain (268 aa).

Active-site proton acceptor residues include glutamate 49 and aspartate 60.

It belongs to the TrpA family. In terms of assembly, tetramer of two alpha and two beta chains.

The catalysed reaction is (1S,2R)-1-C-(indol-3-yl)glycerol 3-phosphate + L-serine = D-glyceraldehyde 3-phosphate + L-tryptophan + H2O. The protein operates within amino-acid biosynthesis; L-tryptophan biosynthesis; L-tryptophan from chorismate: step 5/5. In terms of biological role, the alpha subunit is responsible for the aldol cleavage of indoleglycerol phosphate to indole and glyceraldehyde 3-phosphate. This is Tryptophan synthase alpha chain from Salmonella agona (strain SL483).